Consider the following 296-residue polypeptide: Bifunctional protein FolD 1/3 (296 aa).

Residues 166 to 168 (GRS), Ser-191, and Ile-232 contribute to the NADP(+) site.

This sequence belongs to the tetrahydrofolate dehydrogenase/cyclohydrolase family. As to quaternary structure, homodimer.

It catalyses the reaction (6R)-5,10-methylene-5,6,7,8-tetrahydrofolate + NADP(+) = (6R)-5,10-methenyltetrahydrofolate + NADPH. The enzyme catalyses (6R)-5,10-methenyltetrahydrofolate + H2O = (6R)-10-formyltetrahydrofolate + H(+). Its pathway is one-carbon metabolism; tetrahydrofolate interconversion. In terms of biological role, catalyzes the oxidation of 5,10-methylenetetrahydrofolate to 5,10-methenyltetrahydrofolate and then the hydrolysis of 5,10-methenyltetrahydrofolate to 10-formyltetrahydrofolate. The polypeptide is Bifunctional protein FolD 1/3 (Ruegeria pomeroyi (strain ATCC 700808 / DSM 15171 / DSS-3) (Silicibacter pomeroyi)).